Here is a 340-residue protein sequence, read N- to C-terminus: Glycerol-3-phosphate dehydrogenase [NAD(P)+] (340 aa).

The NADPH site is built by tryptophan 11, arginine 33, and lysine 110. Residues lysine 110, glycine 144, and serine 146 each contribute to the sn-glycerol 3-phosphate site. Alanine 148 is a binding site for NADPH. Sn-glycerol 3-phosphate contacts are provided by lysine 199, aspartate 252, serine 262, arginine 263, and asparagine 264. The active-site Proton acceptor is the lysine 199. Arginine 263 provides a ligand contact to NADPH. Residues valine 287 and glutamate 289 each contribute to the NADPH site.

It belongs to the NAD-dependent glycerol-3-phosphate dehydrogenase family.

It is found in the cytoplasm. It catalyses the reaction sn-glycerol 3-phosphate + NAD(+) = dihydroxyacetone phosphate + NADH + H(+). The enzyme catalyses sn-glycerol 3-phosphate + NADP(+) = dihydroxyacetone phosphate + NADPH + H(+). The protein operates within membrane lipid metabolism; glycerophospholipid metabolism. Its function is as follows. Catalyzes the reduction of the glycolytic intermediate dihydroxyacetone phosphate (DHAP) to sn-glycerol 3-phosphate (G3P), the key precursor for phospholipid synthesis. The protein is Glycerol-3-phosphate dehydrogenase [NAD(P)+] of Polynucleobacter asymbioticus (strain DSM 18221 / CIP 109841 / QLW-P1DMWA-1) (Polynucleobacter necessarius subsp. asymbioticus).